A 71-amino-acid chain; its full sequence is UPF0346 protein Sez_1447 (71 aa).

Belongs to the UPF0346 family.

The polypeptide is UPF0346 protein Sez_1447 (Streptococcus equi subsp. zooepidemicus (strain MGCS10565)).